Here is a 464-residue protein sequence, read N- to C-terminus: Protein VAPYRIN-LIKE (464 aa).

Positions 3 to 124 constitute an MSP domain; it reads RLVKTEFNEV…RDAVITVILV (122 aa). 9 ANK repeats span residues 153–182, 186–215, 217–246, 252–281, 285–314, 318–347, 349–368, 372–401, and 405–435; these read NLTN…DVNF, NGKS…RIND, VDFV…ELDV, EMMT…NANA, RRWT…VKYA, NGKT…LLQA, RVDD…EVNR, NGWT…EVDS, and AGYT…QTNL.

As to expression, expressed in roots.

Its subcellular location is the cytoplasm. The protein resides in the nucleus. The protein localises to the cell membrane. Functionally, may be involved in arbuscular mycorrhizal (AM) symbiosis with AM fungi and in nitrogen-fixing rhizobial bacteria symbiosis leading to the formation of root nodules. The protein is Protein VAPYRIN-LIKE of Medicago truncatula (Barrel medic).